The primary structure comprises 121 residues: uncharacterized protein (121 aa).

In terms of domain architecture, HIT spans 7 to 121 (IFCKIVRGEV…GGREMSWPPG (115 aa)). A Histidine triad motif motif is present at residues 105 to 109 (HLHLH).

This is an uncharacterized protein from Aquifex aeolicus (strain VF5).